The chain runs to 407 residues: COP9 signalosome complex subunit 4 (407 aa).

A PCI domain is found at 204–373; sequence YRRKFIEAAQ…AIVHFENREL (170 aa).

Belongs to the CSN4 family. In terms of assembly, component of the CSN complex, probably composed of CSN1b, alien/CSN2, CSN3, CSN4, CSN5, CSN6, CSN7 and CSN8. Interacts directly with CSN7.

The protein localises to the cytoplasm. It is found in the nucleus. Component of the COP9 signalosome complex (CSN), a complex involved in various cellular and developmental processes. The CSN complex is an essential regulator of the ubiquitin (Ubl) conjugation pathway by mediating the deneddylation of the cullin subunits of the SCF-type E3 ligase complexes, leading to decrease the Ubl ligase activity of SCF. The CSN complex plays an essential role in oogenesis and embryogenesis and is required for proper photoreceptor R cell differentiation and promote lamina glial cell migration or axon targeting. It also promotes Ubl-dependent degradation of cyclin E (CycE) during early oogenesis. The polypeptide is COP9 signalosome complex subunit 4 (CSN4) (Drosophila melanogaster (Fruit fly)).